Here is a 155-residue protein sequence, read N- to C-terminus: Ribonuclease H (155 aa).

One can recognise an RNase H type-1 domain in the interval 1-142; it reads MLKQVEIFTD…CDVLARDAAS (142 aa). The Mg(2+) site is built by aspartate 10, glutamate 48, aspartate 70, and aspartate 134.

It belongs to the RNase H family. As to quaternary structure, monomer. Mg(2+) serves as cofactor.

Its subcellular location is the cytoplasm. It catalyses the reaction Endonucleolytic cleavage to 5'-phosphomonoester.. Functionally, endonuclease that specifically degrades the RNA of RNA-DNA hybrids. The protein is Ribonuclease H of Serratia proteamaculans (strain 568).